Here is a 270-residue protein sequence, read N- to C-terminus: MAVNVRTMWSSMRAQVAMVVALVFLVRGAWCGPPKVPPGKNITATYGKDWLDAKATWYGKPTGAGPDDNGGGCGYKDVNKPPFNSMGACGNIPIFKDGLGCGSCFEIKCDKPVECSGKPVVVHITDMNYEPIAAYHFDLAGTAFGAMAKKGEEEKLRKAGIIDMQFRRVKCKYDSKVTFHLEKGCGPNYLALLVKYVDGDGDIVAVDVKEKGSDTYEPLKHSWGAIWRKDSDKPLKGPLTVRLTTEGGTKSVYDDVIPANWKANTAYTAK.

The signal sequence occupies residues 1–31; it reads MAVNVRTMWSSMRAQVAMVVALVFLVRGAWC. N41 carries N-linked (GlcNAc...) asparagine glycosylation. Residues 70 to 176 enclose the Expansin-like EG45 domain; sequence GGGCGYKDVN…RRVKCKYDSK (107 aa). Disulfide bonds link C73–C101, C104–C171, and C109–C115. Residues 188-269 enclose the Expansin-like CBD domain; the sequence is NYLALLVKYV…NWKANTAYTA (82 aa).

Belongs to the expansin family. Expansin B subfamily. Expressed in pollen.

It is found in the secreted. The protein localises to the cell wall. Its subcellular location is the membrane. May aid fertilization by loosening the cell wall of the stigma and style, thereby facilitating penetration of the pollen tube. Acts selectively on grass cell walls, which are relatively poor in pectins and xyloglucans and rich in glucuronoarabinoxylans and (1-3),(1-4)-beta-D-glucans, when compared with cell walls of other angiosperms, including other monocots. The polypeptide is Expansin-B10 (EXPB10) (Zea mays (Maize)).